The following is a 119-amino-acid chain: Large ribosomal subunit protein eL31 (119 aa).

It belongs to the eukaryotic ribosomal protein eL31 family.

The chain is Large ribosomal subunit protein eL31 (RPL31) from Cyanophora paradoxa.